A 1187-amino-acid polypeptide reads, in one-letter code: DNA excision repair protein CSB (1187 aa).

Over residues 31–43 (QATTDPADSSGPT) the composition is skewed to polar residues. 4 disordered regions span residues 31–53 (QATTDPADSSGPTINGGHQPDDA), 75–102 (IKGAKLKQPSGNKPHEHKGKDQPDHHGA), 217–242 (KRVELPEPSHRQDDSAGQTEEAMEAS), and 265–351 (DSES…EGSD). Composition is skewed to basic and acidic residues over residues 92-101 (KGKDQPDHHG) and 217-230 (KRVELPEPSHRQDD). The span at 300-319 (KRPRNKTKRPLPGKKWRKAN) shows a compositional bias: basic residues. Positions 339-351 (SDDDEDQVTEGSD) are enriched in acidic residues. Positions 384–580 (WELHCQRAGG…WSLFDFVFPG (197 aa)) constitute a Helicase ATP-binding domain. 397–404 (DEMGLGKT) lines the ATP pocket. A disordered region spans residues 457–480 (SSSKKSKRSSDSDSEASWDSDQEE). Residues 468 to 480 (SDSEASWDSDQEE) are compositionally biased toward acidic residues. The DEGH box signature appears at 531–534 (DEGH). Residues 716–876 (KVVEQVLKVW…RRFFKARDMK (161 aa)) enclose the Helicase C-terminal domain. Disordered stretches follow at residues 916 to 945 (LYAASATPTTSGTEPSSSRHGQGKEDHCPD) and 1095 to 1116 (GSASNHTSSSSGNGRASSSSTR). Positions 918-933 (AASATPTTSGTEPSSS) are enriched in low complexity.

It belongs to the SNF2/RAD54 helicase family. Homodimer. Binds DNA. As to expression, expressed in proliferating tissues. Highly expressed in shoot apical meristem (SAM). Expressed in roots, young leaves, flag leaves, and panicles. Expressed at very low levels in mature leaves.

Its subcellular location is the nucleus. In terms of biological role, essential factor involved in transcription-coupled nucleotide excision repair (TCR) which allows RNA polymerase II-blocking lesions to be rapidly removed from the transcribed strand of active genes. Upon DNA-binding, it locally modifies DNA conformation by wrapping the DNA around itself, thereby modifying the interface between stalled RNA polymerase II and DNA. It is required for transcription-coupled repair complex formation. This Oryza sativa subsp. japonica (Rice) protein is DNA excision repair protein CSB.